We begin with the raw amino-acid sequence, 885 residues long: Protein kintoun (885 aa).

Disordered stretches follow at residues 208–235, 371–390, 607–636, 644–663, 781–806, and 819–871; these read LSKNPTAEEKEPHPLEHMYPKKPEADAG, LSREDSGVELNSNGESPVED, ELQQLHHQKKLNKKQRKRNKKQRSLSESAC, EHHEQPMDTLKLPHRKQRSY, RRLSEGDSADYVEVDSTHGSGDQPAH, and NNNH…MMFE. The span at 213-232 shows a compositional bias: basic and acidic residues; sequence TAEEKEPHPLEHMYPKKPEA. Residue serine 376 is modified to Phosphoserine. Residues 612–629 are compositionally biased toward basic residues; the sequence is HHQKKLNKKQRKRNKKQR. Serine 784 is subject to Phosphoserine. The segment covering 824 to 837 has biased composition (basic and acidic residues); the sequence is HVKDNKKQSLHDSG. Positions 842–855 are enriched in low complexity; it reads NGSINNKNNHSNEN.

The protein belongs to the PIH1 family. Kintoun subfamily. As to quaternary structure, interacts with Pp1alpha-96A, Pp1-87B, Pp1-13C and flw.

Its subcellular location is the cytoplasm. Its function is as follows. Required for cytoplasmic pre-assembly of axonemal dyneins, thereby playing a central role in motility in cilia and flagella. Involved in pre-assembly of dynein arm complexes in the cytoplasm before intraflagellar transport loads them for the ciliary compartment. The chain is Protein kintoun from Drosophila mojavensis (Fruit fly).